Here is a 315-residue protein sequence, read N- to C-terminus: MADTIFGSGNDQWVCPNDRQLALRAKLQTGWSVHTYQTEKQRRKQHLSPAEVEAILQVIQRAERLDVLEQQRIGRLVERLETMRRNVMGNGLSQCLLCGEVLGFLGSSSVFCKDCRKKVCTKCGIEASPGQKRPLWLCKICSEQREVWKRSGAWFYKGLPKYILPLKTPGRADDPHFRPLPTEPAEREPRSSETSRIYTWARGRVVSSDSDSDSDLSSSSLEDRLPSTGVRDRKGDKPWKESGGSVEAPRMGFTHPPGHLSGCQSSLASGETGTGSADPPGGPRPGLTRRAPVKDTPGRAPAADAAPAGPSSCLG.

The RabBD domain maps to 41–158 (QRRKQHLSPA…KRSGAWFYKG (118 aa)). Residues 89–146 (GNGLSQCLLCGEVLGFLGSSSVFCKDCRKKVCTKCGIEASPGQKRPLWLCKICSEQRE) form an FYVE-type zinc finger. Zn(2+) is bound by residues cysteine 95, cysteine 98, cysteine 112, cysteine 115, cysteine 120, cysteine 123, cysteine 138, and cysteine 141. Residues 170-315 (GRADDPHFRP…APAGPSSCLG (146 aa)) form a disordered region. Composition is skewed to basic and acidic residues over residues 184–193 (PAEREPRSSE) and 221–240 (LEDR…KPWK). The span at 262-275 (GCQSSLASGETGTG) shows a compositional bias: polar residues. Low complexity predominate over residues 298-315 (GRAPAADAAPAGPSSCLG).

Recruited to dense-core vesicles through specific interaction with RAB27A in endocrine cells. Interacts with RAB3A, RAB3B, RAB3C and RAB3D. Interacts with ZYX. As to expression, moderate to high levels of expression in thyroid, ovary, stomach, heart, pancreas, skeletal muscle, kidney and liver. Also detected in epithelial cells.

Its subcellular location is the cytoplasm. It localises to the cytoplasmic vesicle. The protein resides in the secretory vesicle membrane. Rab GTPase effector involved in the late steps of regulated exocytosis, both in endocrine and exocrine cells. Acts as a potential RAB3B effector protein in epithelial cells. In Homo sapiens (Human), this protein is Rab effector Noc2 (RPH3AL).